The chain runs to 109 residues: ATP synthase subunit c (109 aa).

2 helical membrane-spanning segments follow: residues 42 to 62 (YIGTGITMLAAGAVGLMQGFS) and 88 to 108 (LALAEAVAIYALIVSILIIFV).

This sequence belongs to the ATPase C chain family. F-type ATPases have 2 components, F(1) - the catalytic core - and F(0) - the membrane proton channel. F(1) has five subunits: alpha(3), beta(3), gamma(1), delta(1), epsilon(1). F(0) has three main subunits: a(1), b(2) and c(10-14). The alpha and beta chains form an alternating ring which encloses part of the gamma chain. F(1) is attached to F(0) by a central stalk formed by the gamma and epsilon chains, while a peripheral stalk is formed by the delta and b chains.

It localises to the cell membrane. Its function is as follows. F(1)F(0) ATP synthase produces ATP from ADP in the presence of a proton or sodium gradient. F-type ATPases consist of two structural domains, F(1) containing the extramembraneous catalytic core and F(0) containing the membrane proton channel, linked together by a central stalk and a peripheral stalk. During catalysis, ATP synthesis in the catalytic domain of F(1) is coupled via a rotary mechanism of the central stalk subunits to proton translocation. Functionally, key component of the F(0) channel; it plays a direct role in translocation across the membrane. A homomeric c-ring of between 10-14 subunits forms the central stalk rotor element with the F(1) delta and epsilon subunits. This Ureaplasma urealyticum serovar 10 (strain ATCC 33699 / Western) protein is ATP synthase subunit c.